The following is a 285-amino-acid chain: Bifunctional protein FolD (285 aa).

NADP(+) contacts are provided by residues 165–167 (GRS) and Ser-190.

This sequence belongs to the tetrahydrofolate dehydrogenase/cyclohydrolase family. Homodimer.

The catalysed reaction is (6R)-5,10-methylene-5,6,7,8-tetrahydrofolate + NADP(+) = (6R)-5,10-methenyltetrahydrofolate + NADPH. The enzyme catalyses (6R)-5,10-methenyltetrahydrofolate + H2O = (6R)-10-formyltetrahydrofolate + H(+). It participates in one-carbon metabolism; tetrahydrofolate interconversion. Its function is as follows. Catalyzes the oxidation of 5,10-methylenetetrahydrofolate to 5,10-methenyltetrahydrofolate and then the hydrolysis of 5,10-methenyltetrahydrofolate to 10-formyltetrahydrofolate. The protein is Bifunctional protein FolD of Ligilactobacillus salivarius (strain UCC118) (Lactobacillus salivarius).